The primary structure comprises 149 residues: Large ribosomal subunit protein bL9 (149 aa).

This sequence belongs to the bacterial ribosomal protein bL9 family.

Its function is as follows. Binds to the 23S rRNA. The polypeptide is Large ribosomal subunit protein bL9 (Desulforamulus reducens (strain ATCC BAA-1160 / DSM 100696 / MI-1) (Desulfotomaculum reducens)).